The chain runs to 124 residues: Iron-sulfur cluster insertion protein ErpA (124 aa).

Iron-sulfur cluster-binding residues include Cys-52, Cys-116, and Cys-118.

Belongs to the HesB/IscA family. Homodimer. Iron-sulfur cluster serves as cofactor.

Functionally, required for insertion of 4Fe-4S clusters for at least IspG. The polypeptide is Iron-sulfur cluster insertion protein ErpA (Vibrio atlanticus (strain LGP32) (Vibrio splendidus (strain Mel32))).